An 84-amino-acid chain; its full sequence is MERGYRKTRIGTVTSDKMDKTIVVAVENRVRHPLYGKIIKKTSKFKAHDENNEAKNNDKVLIMETRPLSKDKRWRLVEIVEKAK.

The protein belongs to the universal ribosomal protein uS17 family. Part of the 30S ribosomal subunit.

In terms of biological role, one of the primary rRNA binding proteins, it binds specifically to the 5'-end of 16S ribosomal RNA. In Clostridium kluyveri (strain NBRC 12016), this protein is Small ribosomal subunit protein uS17.